Here is a 416-residue protein sequence, read N- to C-terminus: Calreticulin (416 aa).

Positions 1 to 17 are cleaved as a signal peptide; that stretch reads MLLSVPLLLGLLGLAAA. Positions 18–197 are N-domain; the sequence is DPAIYFKEQF…NSQVESGSLE (180 aa). Gln26 provides a ligand contact to Ca(2+). Residue Lys48 is modified to N6-acetyllysine. Ca(2+)-binding residues include Lys62 and Lys64. Lys64 bears the N6-(2-hydroxyisobutyryl)lysine mark. An intrachain disulfide couples Cys105 to Cys137. Residues Tyr109, Lys111, Tyr128, and Asp135 each contribute to the an alpha-D-glucoside site. Residue Lys159 is modified to N6-acetyllysine. A 1-1 repeat occupies 191–202; sequence VESGSLEDDWDF. Positions 191–255 are 4 X approximate repeats; it reads VESGSLEDDW…DAKKPEDWDE (65 aa). A disordered region spans residues 193-277; sequence SGSLEDDWDF…NPEYKGEWKP (85 aa). The segment at 198–308 is P-domain; it reads DDWDFLPPKK…YSPDANIYAY (111 aa). The span at 207–251 shows a compositional bias: basic and acidic residues; the sequence is KIKDPDAAKPEDWDERAKIDDPTDSKPEDWDKPEHIPDPDAKKPE. Residue Lys209 is modified to N6-acetyllysine. 6 tandem repeats follow at residues 210–221, 227–238, 244–255, 259–269, 273–283, and 287–297. The interval 237-270 is interaction with PPIB; it reads DKPEHIPDPDAKKPEDWDEEMDGEWEPPVIQNPE. Residues 252 to 261 show a composition bias toward acidic residues; it reads DWDEEMDGEW. Residues 259 to 297 are 3 X approximate repeats; it reads GEWEPPVIQNPEYKGEWKPRQIDNPDYKGTWIHPEIDNP. The C-domain stretch occupies residues 309–416; that stretch reads DSFAVLGLDL…DATGQAKDEL (108 aa). Asp317 is an an alpha-D-glucoside binding site. Position 328 (Asp328) interacts with Ca(2+). Residues 350–416 form a disordered region; sequence TKAAEKQMKD…DATGQAKDEL (67 aa). Positions 352-379 are enriched in basic and acidic residues; that stretch reads AAEKQMKDKQDEEQRLKEEEEDKKRKEE. Acidic residues predominate over residues 380-408; the sequence is EEAEDKEDEDDRDEDEDEEDEKEEDEEDA. Positions 413–416 match the Prevents secretion from ER motif; it reads KDEL.

This sequence belongs to the calreticulin family. As to quaternary structure, monomer. Component of an EIF2 complex at least composed of CELF1/CUGBP1, CALR, CALR3, EIF2S1, EIF2S2, HSP90B1 and HSPA5. Interacts with GABARAP, NR3C1 and TRIM21. Interacts with PPIB and SPACA9. Interacts (via P-domain) with PDIA5. Interacts with PDIA3/ERp57. Interacts with CLCC1. As to expression, predentin and odontoblast.

The protein resides in the endoplasmic reticulum lumen. It is found in the cytoplasm. It localises to the cytosol. The protein localises to the secreted. Its subcellular location is the extracellular space. The protein resides in the extracellular matrix. It is found in the cell surface. It localises to the sarcoplasmic reticulum lumen. The protein localises to the cytoplasmic vesicle. Its subcellular location is the secretory vesicle. The protein resides in the cortical granule. It is found in the cytolytic granule. Functionally, calcium-binding chaperone that promotes folding, oligomeric assembly and quality control in the endoplasmic reticulum (ER) via the calreticulin/calnexin cycle. This lectin interacts transiently with almost all of the monoglucosylated glycoproteins that are synthesized in the ER. Interacts with the DNA-binding domain of NR3C1 and mediates its nuclear export. Involved in maternal gene expression regulation. May participate in oocyte maturation via the regulation of calcium homeostasis. Present in the cortical granules of non-activated oocytes, is exocytosed during the cortical reaction in response to oocyte activation and might participate in the block to polyspermy. In Rattus norvegicus (Rat), this protein is Calreticulin (Calr).